Reading from the N-terminus, the 261-residue chain is MVKIPKSHPRYWSLYYREKIIEGMEKGMTAKAGLIAHGRGEAFDYLIGERTIEPAERAMRAAVAKLLLAENPVVSVNGNVAALVPKETIELARALNAKLEINLFYRTEDRVKAIAEELRKYDPEIELLGINPTKRIPGLEHERGKVDENGIWKADVVVVPLEDGDRTEALVRMGKFVITIDLNPLSRSARMADITIVDNIVRAYPRMTELAREMKDYSRGELIRIIEEYDNGKTLNDVLLHIRDRLTKLAEGGIWRKKQLD.

ATP-binding positions include Arg17, Arg39, 181-182 (DL), 187-188 (RS), and 199-200 (NI).

It belongs to the archaeal phosphopantothenate synthetase family. Homodimer.

It catalyses the reaction (R)-4-phosphopantoate + beta-alanine + ATP = (R)-4'-phosphopantothenate + AMP + diphosphate + H(+). It participates in cofactor biosynthesis; coenzyme A biosynthesis. Functionally, catalyzes the condensation of (R)-4-phosphopantoate and beta-alanine to 4'-phosphopantothenate in the CoA biosynthesis pathway. This Thermococcus onnurineus (strain NA1) protein is 4-phosphopantoate--beta-alanine ligase.